Consider the following 354-residue polypeptide: 3-dehydroquinate synthase (354 aa).

Residues 69 to 74 (DGEAEK), 103 to 107 (GVIGD), 127 to 128 (TS), Lys140, and Lys149 contribute to the NAD(+) site. The Zn(2+) site is built by Glu182, His245, and His262.

Belongs to the sugar phosphate cyclases superfamily. Dehydroquinate synthase family. Requires Co(2+) as cofactor. It depends on Zn(2+) as a cofactor. The cofactor is NAD(+).

Its subcellular location is the cytoplasm. The catalysed reaction is 7-phospho-2-dehydro-3-deoxy-D-arabino-heptonate = 3-dehydroquinate + phosphate. The protein operates within metabolic intermediate biosynthesis; chorismate biosynthesis; chorismate from D-erythrose 4-phosphate and phosphoenolpyruvate: step 2/7. In terms of biological role, catalyzes the conversion of 3-deoxy-D-arabino-heptulosonate 7-phosphate (DAHP) to dehydroquinate (DHQ). The protein is 3-dehydroquinate synthase of Colwellia psychrerythraea (strain 34H / ATCC BAA-681) (Vibrio psychroerythus).